We begin with the raw amino-acid sequence, 301 residues long: uncharacterized protein (301 aa).

The active-site Charge relay system is the T47. Residue Y136 is the Proton donor of the active site. K165 acts as the Schiff-base intermediate with substrate in catalysis.

It belongs to the DapA family. As to quaternary structure, homotetramer.

Its subcellular location is the cytoplasm. This is an uncharacterized protein from Thermofilum pendens (strain DSM 2475 / Hrk 5).